Here is a 119-residue protein sequence, read N- to C-terminus: Large ribosomal subunit protein bL19 (119 aa).

This sequence belongs to the bacterial ribosomal protein bL19 family.

In terms of biological role, this protein is located at the 30S-50S ribosomal subunit interface and may play a role in the structure and function of the aminoacyl-tRNA binding site. In Limosilactobacillus fermentum (strain NBRC 3956 / LMG 18251) (Lactobacillus fermentum), this protein is Large ribosomal subunit protein bL19.